A 213-amino-acid polypeptide reads, in one-letter code: Thymidylate kinase (213 aa).

Gly-10–Thr-17 contacts ATP.

This sequence belongs to the thymidylate kinase family.

The enzyme catalyses dTMP + ATP = dTDP + ADP. Phosphorylation of dTMP to form dTDP in both de novo and salvage pathways of dTTP synthesis. In Escherichia coli O6:K15:H31 (strain 536 / UPEC), this protein is Thymidylate kinase.